A 410-amino-acid polypeptide reads, in one-letter code: Sprouty-related, EVH1 domain-containing protein 2 (410 aa).

A WH1 domain is found at 5-122 (THPDDDSYIV…RGVRKAIEDL (118 aa)). Residues 127–171 (TTSSSTLHNEAELGDDDVFTTATDSSSNSSQKREPTTRTISSPTS) form a disordered region. A compositionally biased stretch (polar residues) spans 146–156 (TTATDSSSNSS). The KBD domain occupies 197 to 252 (SYPQVTFPEDDEEIVRINPREKIWMTGYEDYRHAPVRGKYLDTTEDADSYVRFAKG). Phosphotyrosine occurs at positions 224 and 227. The interval 274 to 294 (DPKGSVIKTQPPRAKSRRRKE) is disordered. The SPR domain maps to 300–408 (RCVYCRDMFN…CRCCGGKHKA (109 aa)).

In terms of assembly, homodimer and heterodimer. Able to interact with SPRED1 to form heterodimers. Interacts with RAS. May interact with ZDHHC13 (via ANK repeats) and ZDHHC17 (via ANK repeats). Interacts with TESK1. Interacts with NF1. In terms of processing, phosphorylated on serine and threonine residues. Phosphorylated on tyrosine. Phosphorylation of Tyr-224 and Tyr-227 are required for ubiquitination. Post-translationally, ubiquitinated; leading to degradation by the proteasome. Predominantly expressed in lung, liver and testis. In testis, it is specially found in mature spermatids projecting into the lumen of the seminiferous. Strongly expressed in glandular epithelia. Also expressed in embryonic tissues such as heart, lung, liver and brain.

The protein localises to the cell membrane. The protein resides in the cytoplasmic vesicle. It localises to the secretory vesicle membrane. It is found in the cytoplasm. Its function is as follows. Negatively regulates Ras signaling pathways and downstream activation of MAP kinases. Recruits and translocates NF1 to the cell membrane, thereby enabling NF1-dependent hydrolysis of active GTP-bound Ras to inactive GDP-bound Ras. Inhibits fibroblast growth factor (FGF)-induced retinal lens fiber differentiation, probably by inhibiting FGF-mediated phosphorylation of ERK1/2. Inhibits TGFB-induced epithelial-to-mesenchymal transition in lens epithelial cells. The sequence is that of Sprouty-related, EVH1 domain-containing protein 2 (Spred2) from Mus musculus (Mouse).